The primary structure comprises 346 residues: Fe(3+) ions import ATP-binding protein FbpC 2 (346 aa).

Residues 5–235 form the ABC transporter domain; it reads LEVDGVDKSF…PVDVPTAEFI (231 aa). Position 37–44 (37–44) interacts with ATP; the sequence is GPSGCGKT.

This sequence belongs to the ABC transporter superfamily. Fe(3+) ion importer (TC 3.A.1.10) family. In terms of assembly, the complex is composed of two ATP-binding proteins (FbpC), two transmembrane proteins (FbpB) and a solute-binding protein (FbpA).

It localises to the cell membrane. The catalysed reaction is Fe(3+)(out) + ATP + H2O = Fe(3+)(in) + ADP + phosphate + H(+). Its function is as follows. Part of the ABC transporter complex FbpABC involved in Fe(3+) ions import. Responsible for energy coupling to the transport system. The protein is Fe(3+) ions import ATP-binding protein FbpC 2 of Rhodococcus jostii (strain RHA1).